A 56-amino-acid chain; its full sequence is Preprotein translocase subunit SecG (56 aa).

The Cytoplasmic portion of the chain corresponds to 1 to 30 (MARKDKKTLPASGAGIVRYFNDDTAGVKLS). Residues 31–52 (PKQVVIGTIIVALICIALRFTT) traverse the membrane as a helical segment. The Extracellular segment spans residues 53 to 56 (SVGY).

The protein belongs to the SEC61-beta family. As to quaternary structure, component of the protein translocase complex. Heterotrimer consisting of alpha (SecY), beta (SecG) and gamma (SecE) subunits. Can form oligomers of the heterotrimer.

The protein resides in the cell membrane. Its function is as follows. Involved in protein export. The function of the beta subunit is unknown, but it may be involved in stabilization of the trimeric complex. This chain is Preprotein translocase subunit SecG, found in Methanosphaera stadtmanae (strain ATCC 43021 / DSM 3091 / JCM 11832 / MCB-3).